The primary structure comprises 449 residues: C4-dicarboxylate transport protein 1 (449 aa).

Helical transmembrane passes span 14–34 (SIFL…VGIP), 47–67 (FIKL…VNGI), 83–103 (SVIY…VVAY), 157–177 (ILQV…VGEQ), 195–215 (IMGM…AFTT), 226–246 (LGAL…AVLG), 312–332 (FSIY…TPLA), 359–379 (VILA…LVLV), and 385–405 (FMGI…TVTI).

It belongs to the dicarboxylate/amino acid:cation symporter (DAACS) (TC 2.A.23) family.

It localises to the cell inner membrane. Its function is as follows. Responsible for the transport of dicarboxylates such as succinate, fumarate, and malate from the periplasm across the membrane. This chain is C4-dicarboxylate transport protein 1, found in Pseudomonas aeruginosa (strain UCBPP-PA14).